The chain runs to 452 residues: Protein tipE (452 aa).

At 1 to 20 (MGDEQDKRTGKEKLLFYTTA) the chain is on the cytoplasmic side. The helical transmembrane segment at 21–41 (FFILLGTFSLFAFLFLVPFVI) threads the bilayer. Residues 42-274 (EPAFTTIFMQ…ISDLDYWQNT (233 aa)) lie on the Extracellular side of the membrane. N-linked (GlcNAc...) asparagine glycans are attached at residues Asn72, Asn102, Asn108, Asn212, and Asn237. A helical transmembrane segment spans residues 275–295 (LNLVYSMAIPIPSFIISVIYL). Over 296 to 452 (TYAYFKIYNE…STPPGPTAAV (157 aa)) the chain is Cytoplasmic. Polar residues predominate over residues 423–444 (AISTSNSVQGNLSKTMTTSIST). The tract at residues 423–452 (AISTSNSVQGNLSKTMTTSISTPPGPTAAV) is disordered.

In terms of tissue distribution, preferentially expressed in the central nervous system of developing embryos, weaker expression is seen in the peripheral nervous system. In pupae and adults, expression is seen predominantly in heads, body and legs.

Its subcellular location is the membrane. Its function is as follows. Enhances para sodium channel function. Required during pupal development to rescue adult paralysis and also protects adult flies against heat-induced lethality. In Drosophila melanogaster (Fruit fly), this protein is Protein tipE (tipE).